A 429-amino-acid chain; its full sequence is Protein FAM98B (429 aa).

The tract at residues 304–429 (RVPDRGGRPN…GGGGGGYRRY (126 aa)) is disordered. Residues 305–314 (VPDRGGRPNE) show a composition bias toward basic and acidic residues. Residues 332-429 (GGRGGWGGGG…GGGGGGYRRY (98 aa)) show a composition bias toward gly residues.

The protein belongs to the FAM98 family. As to quaternary structure, homodimer. Component of a tRNA-splicing ligase complex. Interacts with FAM98A.

The protein localises to the nucleus. The protein resides in the cytoplasm. In terms of biological role, positively stimulates PRMT1-induced protein arginine dimethylated arginine methylation. This chain is Protein FAM98B (Fam98b), found in Mus musculus (Mouse).